A 230-amino-acid polypeptide reads, in one-letter code: Pyridoxal phosphate homeostasis protein (230 aa).

Lys-36 is modified (N6-(pyridoxal phosphate)lysine).

The protein belongs to the pyridoxal phosphate-binding protein YggS/PROSC family.

Functionally, perhaps involved in proline biosynthesis. In terms of biological role, pyridoxal 5'-phosphate (PLP)-binding protein, which is involved in PLP homeostasis. The polypeptide is Pyridoxal phosphate homeostasis protein (Pseudomonas aeruginosa (strain ATCC 15692 / DSM 22644 / CIP 104116 / JCM 14847 / LMG 12228 / 1C / PRS 101 / PAO1)).